Here is a 419-residue protein sequence, read N- to C-terminus: 3-isopropylmalate dehydratase large subunit (419 aa).

[4Fe-4S] cluster contacts are provided by Cys301, Cys361, and Cys364.

The protein belongs to the aconitase/IPM isomerase family. LeuC type 2 subfamily. As to quaternary structure, heterodimer of LeuC and LeuD. [4Fe-4S] cluster is required as a cofactor.

The catalysed reaction is (2R,3S)-3-isopropylmalate = (2S)-2-isopropylmalate. It participates in amino-acid biosynthesis; L-leucine biosynthesis; L-leucine from 3-methyl-2-oxobutanoate: step 2/4. Catalyzes the isomerization between 2-isopropylmalate and 3-isopropylmalate, via the formation of 2-isopropylmaleate. The chain is 3-isopropylmalate dehydratase large subunit from Campylobacter hominis (strain ATCC BAA-381 / DSM 21671 / CCUG 45161 / LMG 19568 / NCTC 13146 / CH001A).